The primary structure comprises 568 residues: Proline--tRNA ligase (568 aa).

Belongs to the class-II aminoacyl-tRNA synthetase family. ProS type 1 subfamily. In terms of assembly, homodimer.

It localises to the cytoplasm. It carries out the reaction tRNA(Pro) + L-proline + ATP = L-prolyl-tRNA(Pro) + AMP + diphosphate. Its function is as follows. Catalyzes the attachment of proline to tRNA(Pro) in a two-step reaction: proline is first activated by ATP to form Pro-AMP and then transferred to the acceptor end of tRNA(Pro). As ProRS can inadvertently accommodate and process non-cognate amino acids such as alanine and cysteine, to avoid such errors it has two additional distinct editing activities against alanine. One activity is designated as 'pretransfer' editing and involves the tRNA(Pro)-independent hydrolysis of activated Ala-AMP. The other activity is designated 'posttransfer' editing and involves deacylation of mischarged Ala-tRNA(Pro). The misacylated Cys-tRNA(Pro) is not edited by ProRS. The protein is Proline--tRNA ligase of Listeria innocua serovar 6a (strain ATCC BAA-680 / CLIP 11262).